We begin with the raw amino-acid sequence, 272 residues long: Undecaprenyl-diphosphatase (272 aa).

A run of 7 helical transmembrane segments spans residues 39–59 (SGLT…FVYF), 87–107 (WMIV…EQPI), 113–133 (SSPL…GLTD), 145–165 (ITLG…VPGV), 188–208 (FSFL…GLHL), 220–240 (PMLV…AFLL), and 251–271 (FVWY…VGLL).

It belongs to the UppP family.

Its subcellular location is the cell inner membrane. The catalysed reaction is di-trans,octa-cis-undecaprenyl diphosphate + H2O = di-trans,octa-cis-undecaprenyl phosphate + phosphate + H(+). Functionally, catalyzes the dephosphorylation of undecaprenyl diphosphate (UPP). Confers resistance to bacitracin. This chain is Undecaprenyl-diphosphatase, found in Trichlorobacter lovleyi (strain ATCC BAA-1151 / DSM 17278 / SZ) (Geobacter lovleyi).